Consider the following 659-residue polypeptide: Probable acyl-coenzyme A oxidase acox-1.5 (659 aa).

FAD contacts are provided by residues 148-151, 156-157, and Gly190; these read YAQT and GT. Substrate contacts are provided by residues 284 to 287 and Arg294; that span reads KVGY. FAD is bound by residues Arg319 and 339-342; that span reads QQYR. ATP is bound by residues His395 and Gln403. Gly410 serves as a coordination point for FAD. 432 to 433 contacts substrate; sequence YE. Glu433 (proton acceptor) is an active-site residue. Glu435 is an FAD binding site. An ATP-binding site is contributed by 524-527; that stretch reads KAAR. Positions 657–659 match the Microbody targeting signal motif; sequence SKL.

It belongs to the acyl-CoA oxidase family. In terms of assembly, homodimer. Requires FAD as cofactor.

The protein localises to the peroxisome. It participates in lipid metabolism; peroxisomal fatty acid beta-oxidation. With respect to regulation, activated by ATP. ATP binding leads to a conformational change that promotes FAD cofactor binding and enzyme activity. ATP binding likely occurs during acox-1.5 folding and/or dimer formation. Its function is as follows. Involved in the first step of peroxisomal beta-oxidation by catalyzing the desaturation of fatty acid-derived side chains. The protein is Probable acyl-coenzyme A oxidase acox-1.5 of Caenorhabditis elegans.